We begin with the raw amino-acid sequence, 71 residues long: Small ribosomal subunit protein bS21 (71 aa).

The protein belongs to the bacterial ribosomal protein bS21 family.

The protein is Small ribosomal subunit protein bS21 of Shewanella amazonensis (strain ATCC BAA-1098 / SB2B).